Reading from the N-terminus, the 508-residue chain is MDGNAKGGGHSEALKNYNLGRTLGIGSFGKVKIAEHKLTGHRVAIKILNRRQMRNMEMEEKAKREIKILRLFIHPHIIRLYEVIYTPTDIYVVMEYCKFGELFDYIVEKGRLQEDEARRIFQQIISGVEYCHRNMVVHRDLKPENLLLDSKYNVKLADFGLSNVMHDGHFLKTSCGSPNYAAPEVISGKLYAGPEVDVWSCGVILYALLCGTLPFDDENIPNLFKKIKGGIYTLPSHLSALARDLIPRMLVVDPMKRITIREIREHQWFQIRLPRYLAVPPPDTAQQAKMIDEDTLQDVVNLGYGKDHVCESLRNRLQNEATVAYYLLLDNRFRATSGYLGADYQESLERNFNRFASSESASSNTRHYLPGSSDPHASGLRPHYPVERKWALGLQSRAQPREIMIEVLKALQDLNVSWKKNGQYNMKCRWSVGTQATDMLDVNNSFVDDSIIMDNGDVNGRLPAVIKFEIQLYKTRDEKYLLDMQRVTGPQLLFLDFCADFLTKLRVL.

A Protein kinase domain is found at 17–269 (YNLGRTLGIG…IREIREHQWF (253 aa)). ATP contacts are provided by residues 23 to 31 (LGIGSFGKV) and Lys-46. Catalysis depends on Asp-140, which acts as the Proton acceptor. Residues 290-330 (MIDEDTLQDVVNLGYGKDHVCESLRNRLQNEATVAYYLLLD) form the UBA domain. Residues 459-507 (NGRLPAVIKFEIQLYKTRDEKYLLDMQRVTGPQLLFLDFCADFLTKLRV) form the KA1 domain.

It belongs to the protein kinase superfamily. Ser/Thr protein kinase family. As to quaternary structure, interacts with HDR1. As to expression, strongly expressed in immature seeds. Mostly expressed in panicles, and to a lower extent, in leaf sheaths.

The protein localises to the nucleus. The enzyme catalyses L-seryl-[protein] + ATP = O-phospho-L-seryl-[protein] + ADP + H(+). It carries out the reaction L-threonyl-[protein] + ATP = O-phospho-L-threonyl-[protein] + ADP + H(+). In Oryza sativa subsp. indica (Rice), this protein is Serine/threonine protein kinase OSK3.